Here is an 88-residue protein sequence, read N- to C-terminus: Small ribosomal subunit protein uS15 (88 aa).

It belongs to the universal ribosomal protein uS15 family. Part of the 30S ribosomal subunit. Forms a bridge to the 50S subunit in the 70S ribosome, contacting the 23S rRNA.

Functionally, one of the primary rRNA binding proteins, it binds directly to 16S rRNA where it helps nucleate assembly of the platform of the 30S subunit by binding and bridging several RNA helices of the 16S rRNA. Forms an intersubunit bridge (bridge B4) with the 23S rRNA of the 50S subunit in the ribosome. This is Small ribosomal subunit protein uS15 from Methylacidiphilum infernorum (isolate V4) (Methylokorus infernorum (strain V4)).